The sequence spans 723 residues: Catalase-peroxidase (723 aa).

Residues 1–29 (MDGNDLVENKCPVMHGGITVAGHSNTAWW) form the signal peptide. The tryptophyl-tyrosyl-methioninium (Trp-Tyr) (with M-251) cross-link spans 97–225 (WHSAGSYRLA…LAAVQMGLIY (129 aa)). H98 serves as the catalytic Proton acceptor. Positions 225 to 251 (YVNPEGVNGKSDPLKSAAQVRETFARM) form a cross-link, tryptophyl-tyrosyl-methioninium (Tyr-Met) (with W-97). H266 contributes to the heme b binding site.

The protein belongs to the peroxidase family. Peroxidase/catalase subfamily. In terms of assembly, homodimer or homotetramer. The cofactor is heme b. In terms of processing, formation of the three residue Trp-Tyr-Met cross-link is important for the catalase, but not the peroxidase activity of the enzyme.

The catalysed reaction is H2O2 + AH2 = A + 2 H2O. It catalyses the reaction 2 H2O2 = O2 + 2 H2O. Bifunctional enzyme with both catalase and broad-spectrum peroxidase activity. In Hyphomonas neptunium (strain ATCC 15444), this protein is Catalase-peroxidase.